We begin with the raw amino-acid sequence, 1154 residues long: MQAMEGEVLLPALYEEEEEEEEEEEEVEEEEEQVQKGGSVGSLSVNKHRGLSLTETELEELRAQVLQLVAELEETRELAGQHEDDSLELQGLLEDERLASAQQAEVFTKQIQQLQGELRSLREEISLLEHEKESELKEIEQELHLAQAEIQSLRQAAEDSATEHESDIASLQEDLCRMQNELEDMERIRGDYEMEIASLRAEMEMKSSEPSGSLGLSDYSGLQEELQELRERYHFLNEEYRALQESNSSLTGQLADLESERTQRATERWLQSQTLSMTSAESQTSEMDFLEPDPEMQLLRQQLRDAEEQMHGMKNKCQELCCELEELQHHRQVSEEEQRRLQRELKCAQNEVLRFQTSHSVTQNEELKSRLCTLQKKYDTSQDEQNELLKMQLQLQTELRQLKVMKSTLVENQSEKELLCRLQKLHLQHQNVTCEKEKLLERQQQLQEELQCHEAELQHLRDTVASFKESNEKDTETHAQLQEMKQLYQASKDELERQKHMYDQLEQDLLLCQLELKELKASHPIPEDKGKCANKCDTLLSRLTELQEKYKASQKEMGQLQMEQCELLEDQRRMQEEQGQLQEELHRLTLPLPKSGLLLKSQELLTKLEDLCELQLLYQGMQEEQKKLIQNQDCVLKEQLEIHEELRRFKESHFQEVLENPDDSKLAKSSKCNRNKQSKLLMEQMQALQVMYDAGQAKQELLQQEQGRLLEERKRLQADLQLCLEEMQLLQVQSPSIKMSLESYGKSYGSMVPSNENCRKTYDTTVDDNESYYKSYTSTQTSSKSFLKSYDSSTSASEAYGKSYCTTSNSSITYKKSYGSTSSSDTCQKSFVSSCTDEEPAEPEDMERFEEMVVKVLIKLQAVQAMYQISQEEHSQLQEQMEKLLAKQKDLKEELDACEREFKECMECLEKPMAPQNDKNEIKELQTKLRELQLQYQASMDEQGRLLVVQEQLEGQLQCCQEELRQLREKRPSVVKEARGKNANKNMNKNANGVKMKKVTKPCSDTSESDLETRKSLEVVLYYKASQRKLDGLAKEEEKKEEMEEEKKQVKEEAKEQCGDELVAEPADPEEAKSTEDQEENEEDKEEEEKEEDSEEEEDDADSSLESPEENNPLRLSESKKSSPTPNPPIFSLPLVGLVVISALLWCWWAETSS.

Residues 1-48 (MQAMEGEVLLPALYEEEEEEEEEEEEVEEEEEQVQKGGSVGSLSVNKH) are disordered. Over residues 14-32 (YEEEEEEEEEEEEVEEEEE) the composition is skewed to acidic residues. The residue at position 52 (Ser52) is a Phosphoserine. Coiled coils occupy residues 696 to 733 (QAKQ…LQVQ) and 859 to 974 (KLQA…RPSV). Residues 1031–1058 (DGLAKEEEKKEEMEEEKKQVKEEAKEQC) are compositionally biased toward basic and acidic residues. A disordered region spans residues 1031-1131 (DGLAKEEEKK…SSPTPNPPIF (101 aa)). Positions 1077–1109 (DQEENEEDKEEEEKEEDSEEEEDDADSSLESPE) are enriched in acidic residues. A helical membrane pass occupies residues 1130 to 1150 (IFSLPLVGLVVISALLWCWWA).

Expressed in gastric tissues. Down-regulated in gastric cancer.

The protein resides in the cytoplasmic vesicle. The protein localises to the secretory vesicle. It is found in the acrosome membrane. Its function is as follows. May play a role in acrosome formation in spermatogenesis and in fertilization. The sequence is that of Coiled-coil domain-containing protein 136 (CCDC136) from Homo sapiens (Human).